The primary structure comprises 440 residues: Gap junction alpha-8 protein (440 aa).

Residues 2-12 (GDWSFLGNILE) lie within the membrane without spanning it. Topologically, residues 13-21 (EVNEHSTVI) are cytoplasmic. Residues 22–42 (GRVWLTVLFIFRILILGTAAE) form a helical membrane-spanning segment. The Extracellular segment spans residues 43–71 (FVWGDEQSDFVCNTQQPGCENVCYDEAFP). Cystine bridges form between Cys54–Cys201, Cys61–Cys195, and Cys65–Cys190. A helical transmembrane segment spans residues 72–92 (ISHIRLWVLQIIFVSTPSLMY). At 93–161 (VGHAVHHVRM…GTLLRTYVCH (69 aa)) the chain is on the cytoplasmic side. The disordered stretch occupies residues 111–143 (AEELCQQSRSNGGERVPIAPDQASIRKSSSSSK). The chain crosses the membrane as a helical span at residues 162–182 (IIFKTLFEVGFIVGHYFLYGF). The Extracellular portion of the chain corresponds to 183–210 (RILPLYRCSRWPCPNVVDCFVSRPTEKT). The helical transmembrane segment at 211–231 (IFILFMLSVAFVSLFLNIMEM) threads the bilayer. Residues 232 to 440 (SHLGMKGIRS…SRARSDDLTI (209 aa)) are Cytoplasmic-facing. Residues 334–440 (GAQEVEREEQ…SRARSDDLTI (107 aa)) form a disordered region. 2 stretches are compositionally biased toward basic and acidic residues: residues 353–364 (VGEKKQEAEKVA) and 375–399 (DGEK…EKVT). The span at 423–432 (LSRLSKASSR) shows a compositional bias: low complexity.

Belongs to the connexin family. Alpha-type (group II) subfamily. In terms of assembly, a hemichannel or connexon is composed of a hexamer of connexins. A functional gap junction is formed by the apposition of two hemichannels. Forms heteromeric channels with GJA3. In terms of tissue distribution, detected in eye lens (at protein level).

The protein localises to the cell membrane. The protein resides in the cell junction. It is found in the gap junction. In terms of biological role, structural component of eye lens gap junctions. Gap junctions are dodecameric channels that connect the cytoplasm of adjoining cells. They are formed by the docking of two hexameric hemichannels, one from each cell membrane. Small molecules and ions diffuse from one cell to a neighboring cell via the central pore. The sequence is that of Gap junction alpha-8 protein (Gja8) from Rattus norvegicus (Rat).